The chain runs to 618 residues: MSKYTILDKINTPSDLKLVPEGQLKELASELRTFLVDTLDVSGGHFASSLGATELTVALHYVFNTPYDNIVWDVGHQTYIHKILTGRKDKLITIKKDGGISGFPKRSESEYDTFGVGHSSTSISAALGMAIADRLQGKHSSSIAVIGDGAITGGMAFEALNHAGGIKEDILVILNDNEMSISDNVGGLSAHFSKIISGGFYNSIREKGKEVLKNIPPMFEFVKKIETQTKGMFVPANFFEDLGFYYVGPIDGHNVVELVKTLRILKDHKGPKLLHVITKKGKGYTKAESDPIKFHHVAPSFHSGDAQSKASKPTYSNIFGNWICQKAAKDKRLVGVTPAMKEGSDLIRFSQQYPNRYFDVAIAEQHAVTFAGGLACQGLKPVVAIYSTFLQRAYDQVIHDIALQDLDVLYAVDRAGLVGADGATHDGSFDISFMRCIPNHVIMTPSDENETYHMLELGYEYKGPAMVRYPRGAGIGAEITDNLDIKLGKAKLVKKGSRVAILNFGTLLPLANQLADKYHITVVDMRFVKPLDEQMINQICQNHNIVFTLEESSIAGGAGSAVNEYIFANDLSKNITVRNFGLKDEFLTHGTKDLLLDYSNLSFNKIAEVLEKLLSHKK.

Thiamine diphosphate contacts are provided by residues H76 and 117-119 (GHS). D148 is a Mg(2+) binding site. Residues 149 to 150 (GA), N177, Y284, and E364 each bind thiamine diphosphate. N177 is a Mg(2+) binding site.

Belongs to the transketolase family. DXPS subfamily. As to quaternary structure, homodimer. The cofactor is Mg(2+). Thiamine diphosphate is required as a cofactor.

It carries out the reaction D-glyceraldehyde 3-phosphate + pyruvate + H(+) = 1-deoxy-D-xylulose 5-phosphate + CO2. It participates in metabolic intermediate biosynthesis; 1-deoxy-D-xylulose 5-phosphate biosynthesis; 1-deoxy-D-xylulose 5-phosphate from D-glyceraldehyde 3-phosphate and pyruvate: step 1/1. In terms of biological role, catalyzes the acyloin condensation reaction between C atoms 2 and 3 of pyruvate and glyceraldehyde 3-phosphate to yield 1-deoxy-D-xylulose-5-phosphate (DXP). The sequence is that of 1-deoxy-D-xylulose-5-phosphate synthase from Francisella philomiragia subsp. philomiragia (strain ATCC 25017 / CCUG 19701 / FSC 153 / O#319-036).